Reading from the N-terminus, the 864-residue chain is Alanine--tRNA ligase (864 aa).

Positions 534, 538, 639, and 643 each coordinate Zn(2+).

It belongs to the class-II aminoacyl-tRNA synthetase family. It depends on Zn(2+) as a cofactor.

It is found in the cytoplasm. It catalyses the reaction tRNA(Ala) + L-alanine + ATP = L-alanyl-tRNA(Ala) + AMP + diphosphate. Its function is as follows. Catalyzes the attachment of alanine to tRNA(Ala) in a two-step reaction: alanine is first activated by ATP to form Ala-AMP and then transferred to the acceptor end of tRNA(Ala). Also edits incorrectly charged Ser-tRNA(Ala) and Gly-tRNA(Ala) via its editing domain. The chain is Alanine--tRNA ligase from Aster yellows witches'-broom phytoplasma (strain AYWB).